The primary structure comprises 364 residues: Chorismate synthase (364 aa).

R48 is a binding site for NADP(+). Residues 125 to 127, 237 to 238, G277, 292 to 296, and R318 contribute to the FMN site; these read RSS, NA, and KPTSS.

Belongs to the chorismate synthase family. As to quaternary structure, homotetramer. The cofactor is FMNH2.

It catalyses the reaction 5-O-(1-carboxyvinyl)-3-phosphoshikimate = chorismate + phosphate. It participates in metabolic intermediate biosynthesis; chorismate biosynthesis; chorismate from D-erythrose 4-phosphate and phosphoenolpyruvate: step 7/7. Its function is as follows. Catalyzes the anti-1,4-elimination of the C-3 phosphate and the C-6 proR hydrogen from 5-enolpyruvylshikimate-3-phosphate (EPSP) to yield chorismate, which is the branch point compound that serves as the starting substrate for the three terminal pathways of aromatic amino acid biosynthesis. This reaction introduces a second double bond into the aromatic ring system. This is Chorismate synthase from Albidiferax ferrireducens (strain ATCC BAA-621 / DSM 15236 / T118) (Rhodoferax ferrireducens).